The primary structure comprises 175 residues: Large ribosomal subunit protein uL10 (175 aa).

It belongs to the universal ribosomal protein uL10 family. As to quaternary structure, part of the ribosomal stalk of the 50S ribosomal subunit. The N-terminus interacts with L11 and the large rRNA to form the base of the stalk. The C-terminus forms an elongated spine to which L12 dimers bind in a sequential fashion forming a multimeric L10(L12)X complex.

In terms of biological role, forms part of the ribosomal stalk, playing a central role in the interaction of the ribosome with GTP-bound translation factors. In Picosynechococcus sp. (strain ATCC 27264 / PCC 7002 / PR-6) (Agmenellum quadruplicatum), this protein is Large ribosomal subunit protein uL10.